We begin with the raw amino-acid sequence, 89 residues long: Teretoxin Tan22.12 (89 aa).

Residues 1-22 (MKVLFTLAMIVVTLCLGQRMRR) form the signal peptide.

The protein belongs to the teretoxin C (TC) superfamily. In terms of processing, contains 4 disulfide bonds. In terms of tissue distribution, expressed by the venom duct.

It localises to the secreted. In Terebra anilis (Auger snail), this protein is Teretoxin Tan22.12.